Reading from the N-terminus, the 299-residue chain is Biphenyl-2,3-diol 1,2-dioxygenase (299 aa).

2 VOC domains span residues 6–121 (ELGY…IFYG) and 146–267 (GIGH…FGWG). Positions 149, 212, and 263 each coordinate Fe cation.

The protein belongs to the extradiol ring-cleavage dioxygenase family. In terms of assembly, homooctamer. The cofactor is Fe(2+).

The enzyme catalyses biphenyl-2,3-diol + O2 = 2-hydroxy-6-oxo-6-phenylhexa-2,4-dienoate + H(+). The protein operates within xenobiotic degradation; biphenyl degradation; 2-hydroxy-2,4-pentadienoate and benzoate from biphenyl: step 3/4. The protein is Biphenyl-2,3-diol 1,2-dioxygenase (bphC) of Sphingomonas paucimobilis (Pseudomonas paucimobilis).